Here is a 452-residue protein sequence, read N- to C-terminus: Growth/differentiation factor 6 (452 aa).

Residues 1-22 form the signal peptide; that stretch reads MDTPRVLLWAIFLISFLWDLPG. The propeptide occupies 23–332; the sequence is FQQASISSSS…LPSPGRRRRR (310 aa). The interval 29–93 is disordered; it reads SSSSSTELDS…QEPPGRGPRV (65 aa). 2 stretches are compositionally biased toward basic and acidic residues: residues 37–46 and 58–75; these read DSTKDVENRK and AEGR…ELRR. Asn115 carries an N-linked (GlcNAc...) asparagine glycan. Disordered stretches follow at residues 244–267 and 301–348; these read RDSG…LGFG and AEAA…KKSR. The span at 301–317 shows a compositional bias: low complexity; that stretch reads AEAAGAEGSWPAPSGAP. Positions 327-348 are enriched in basic residues; sequence GRRRRRTALSSRHGKRHGKKSR. Cystine bridges form between Cys351/Cys417, Cys380/Cys449, and Cys384/Cys451.

It belongs to the TGF-beta family. In terms of assembly, homodimer; disulfide-linked.

Its subcellular location is the secreted. Functionally, growth factor that controls proliferation and cellular differentiation in the retina and bone formation. Plays a key role in regulating apoptosis during retinal development. Establishes dorsal-ventral positional information in the retina and controls the formation of the retinotectal map. Required for normal formation of bones and joints in the limbs, skull, digits and axial skeleton. Plays a key role in establishing boundaries between skeletal elements during development. Regulation of GDF6 expression seems to be a mechanism for evolving species-specific changes in skeletal structures. Seems to positively regulate differentiation of chondrogenic tissue through the growth factor receptors subunits BMPR1A, BMPR1B, BMPR2 and ACVR2A, leading to the activation of SMAD1-SMAD5-SMAD8 complex. The regulation of chondrogenic differentiation is inhibited by NOG. Also involved in the induction of adipogenesis from mesenchymal stem cells. This mechanism acts through the growth factor receptors subunits BMPR1A, BMPR2 and ACVR2A and the activation of SMAD1-SMAD5-SMAD8 complex and MAPK14/p38. The sequence is that of Growth/differentiation factor 6 (Gdf6) from Rattus norvegicus (Rat).